The chain runs to 448 residues: T-box transcription factor TBX19 (448 aa).

Positions 45–218 (LEDAPLWQRF…YNPFAKAFLD (174 aa)) form a DNA-binding region, T-box.

It is found in the nucleus. Its function is as follows. Transcriptional regulator involved in developmental processes. Can activate POMC gene expression and repress the alpha glycoprotein subunit and thyroid-stimulating hormone beta promoters. This chain is T-box transcription factor TBX19, found in Homo sapiens (Human).